Consider the following 144-residue polypeptide: UPF0102 protein BTH_I3148 (144 aa).

The interval 1-20 (MCHARAARQATGEAEAAPRD) is disordered.

Belongs to the UPF0102 family.

This is UPF0102 protein BTH_I3148 from Burkholderia thailandensis (strain ATCC 700388 / DSM 13276 / CCUG 48851 / CIP 106301 / E264).